A 67-amino-acid polypeptide reads, in one-letter code: Neurotoxin Os3 (67 aa).

An LCN-type CS-alpha/beta domain is found at 3–67 (RDGYIAQPHN…GVIVDGEKCH (65 aa)). Disulfide bonds link Cys13/Cys66, Cys17/Cys39, Cys24/Cys48, and Cys28/Cys50.

The protein belongs to the long (4 C-C) scorpion toxin superfamily. Sodium channel inhibitor family. Alpha subfamily. Expressed by the venom gland.

Its subcellular location is the secreted. Functionally, binds to sodium channels (Nav) and inhibits the inactivation of the activated channels, thereby blocking neuronal transmission. The sequence is that of Neurotoxin Os3 from Orthochirus scrobiculosus (Central Asian scorpion).